A 448-amino-acid polypeptide reads, in one-letter code: MTSSVDKVSQKVADVKLGSSKSTKNNKSKGKGKSNKNQVVEDDDEDDFEKALELAMQLDAQKLAQKKADDVPLVEEEEKKVEEKIEQQYDPISTFYPDGNYPQGEVVDYKDDNLYRTTDEEKRALDREKNNKWNEFRKGAEIHRRVRKLAKDEIKPGMSMIEIAELIENAVRGYSGEDGLKGGMGFPCGLSLNHCAAHYSPNANDKLVLNYEDVMKVDFGVHVNGHIIDSAFTLTFDDKYDDLLKAVKDATNTGIREAGIDVRLTDIGEAIQEVMESYEVTLDGETYQVKPIKNLCGHNIGQYRIHGGKSVPIVKNFDNTKMEEGETFAIETFGSTGRGHVIGQGECSHYAKNPDAPANAISSIRVNRAKQLLKTIDENFGTLPFCRRYIDRLGEEKYLLALNQLVKSGVVSDYPPLVDVKGSYTAQYEHTILLRPNVKEVVSRGEDY.

A disordered region spans residues 1–47; that stretch reads MTSSVDKVSQKVADVKLGSSKSTKNNKSKGKGKSNKNQVVEDDDEDD. Over residues 24–34 the composition is skewed to basic residues; the sequence is KNNKSKGKGKS. H198 is a substrate binding site. Residues D218, D229, and H298 each coordinate a divalent metal cation. Residue H306 coordinates substrate. A divalent metal cation contacts are provided by E331 and E429.

The protein belongs to the peptidase M24A family. Methionine aminopeptidase eukaryotic type 2 subfamily. Co(2+) serves as cofactor. The cofactor is Zn(2+). Requires Mn(2+) as cofactor. It depends on Fe(2+) as a cofactor.

It is found in the cytoplasm. It catalyses the reaction Release of N-terminal amino acids, preferentially methionine, from peptides and arylamides.. Cotranslationally removes the N-terminal methionine from nascent proteins. The N-terminal methionine is often cleaved when the second residue in the primary sequence is small and uncharged (Met-Ala-, Cys, Gly, Pro, Ser, Thr, or Val). This is Methionine aminopeptidase 2 from Komagataella phaffii (strain GS115 / ATCC 20864) (Yeast).